A 382-amino-acid chain; its full sequence is Cell division protein DivIB (382 aa).

At 1–103 the chain is on the cytoplasmic side; sequence MAKDKEKQSD…SATQIAFQKS (103 aa). 2 stretches are compositionally biased toward basic and acidic residues: residues 36-49 and 60-70; these read EKKLKEKLLSDKKA and VELKTDEKTDS. Positions 36–92 are disordered; that stretch reads EKKLKEKLLSDKKAQQQAQNASEAVELKTDEKTDSQEIESETTSKPKKTKKVRQPKE. The chain crosses the membrane as a helical span at residues 104–124; the sequence is LPVLLGALLLMAVSIFMITPY. The POTRA domain occupies 125 to 196; that stretch reads SKKKEFSVRG…NHFLFNVIEF (72 aa). Residues 125–382 are Extracellular-facing; sequence SKKKEFSVRG…PETVLEQAHG (258 aa). The interval 322-382 is disordered; the sequence is QEIENQPEVP…PETVLEQAHG (61 aa). A compositionally biased stretch (basic and acidic residues) spans 338–352; that stretch reads AADKEGDKPGEHQEQ.

Belongs to the FtsQ/DivIB family. DivIB subfamily.

The protein resides in the cell membrane. In terms of biological role, cell division protein that may be involved in stabilizing or promoting the assembly of the division complex. The protein is Cell division protein DivIB of Streptococcus pyogenes serotype M2 (strain MGAS10270).